Consider the following 81-residue polypeptide: High-potential iron-sulfur protein (81 aa).

Residues cysteine 43, cysteine 46, cysteine 59, and cysteine 73 each coordinate [4Fe-4S] cluster.

The protein belongs to the high-potential iron-sulfur protein (HiPIP) family. In terms of assembly, homodimer.

The protein localises to the periplasm. Specific class of high-redox-potential 4Fe-4S ferredoxins. Functions in anaerobic electron transport in most purple and in some other photosynthetic bacteria and in at least one genus (Paracoccus) of halophilic, denitrifying bacteria. The chain is High-potential iron-sulfur protein from Halochromatium salexigens (Chromatium salexigens).